A 206-amino-acid chain; its full sequence is Ribosomal RNA large subunit methyltransferase E (206 aa).

Residues Gly60, Trp62, Asp80, Asn96, and Asp121 each contribute to the S-adenosyl-L-methionine site. Catalysis depends on Lys161, which acts as the Proton acceptor.

Belongs to the class I-like SAM-binding methyltransferase superfamily. RNA methyltransferase RlmE family.

The protein localises to the cytoplasm. It carries out the reaction uridine(2552) in 23S rRNA + S-adenosyl-L-methionine = 2'-O-methyluridine(2552) in 23S rRNA + S-adenosyl-L-homocysteine + H(+). Specifically methylates the uridine in position 2552 of 23S rRNA at the 2'-O position of the ribose in the fully assembled 50S ribosomal subunit. The protein is Ribosomal RNA large subunit methyltransferase E of Francisella philomiragia subsp. philomiragia (strain ATCC 25017 / CCUG 19701 / FSC 153 / O#319-036).